The chain runs to 202 residues: Small ribosomal subunit protein uS4 (202 aa).

The S4 RNA-binding domain maps to 93–155 (RRLDNVVRRV…ENLKNLYRGV (63 aa)).

This sequence belongs to the universal ribosomal protein uS4 family. Part of the 30S ribosomal subunit. Contacts protein S5. The interaction surface between S4 and S5 is involved in control of translational fidelity.

Functionally, one of the primary rRNA binding proteins, it binds directly to 16S rRNA where it nucleates assembly of the body of the 30S subunit. Its function is as follows. With S5 and S12 plays an important role in translational accuracy. The sequence is that of Small ribosomal subunit protein uS4 from Rhodopirellula baltica (strain DSM 10527 / NCIMB 13988 / SH1).